A 219-amino-acid chain; its full sequence is Probable transaldolase (219 aa).

Lys-83 serves as the catalytic Schiff-base intermediate with substrate.

It belongs to the transaldolase family. Type 3B subfamily.

Its subcellular location is the cytoplasm. It carries out the reaction D-sedoheptulose 7-phosphate + D-glyceraldehyde 3-phosphate = D-erythrose 4-phosphate + beta-D-fructose 6-phosphate. Its pathway is carbohydrate degradation; pentose phosphate pathway; D-glyceraldehyde 3-phosphate and beta-D-fructose 6-phosphate from D-ribose 5-phosphate and D-xylulose 5-phosphate (non-oxidative stage): step 2/3. Transaldolase is important for the balance of metabolites in the pentose-phosphate pathway. The sequence is that of Probable transaldolase from Cereibacter sphaeroides (strain ATCC 17029 / ATH 2.4.9) (Rhodobacter sphaeroides).